The sequence spans 870 residues: LPS-assembly protein LptD (870 aa).

A signal peptide spans 1–25; that stretch reads MKQGKSFIFYCLVLLLCGFQQLSSA.

It belongs to the LptD family. In terms of assembly, component of the lipopolysaccharide transport and assembly complex. Interacts with LptE and LptA.

It is found in the cell outer membrane. Its function is as follows. Together with LptE, is involved in the assembly of lipopolysaccharide (LPS) at the surface of the outer membrane. This chain is LPS-assembly protein LptD, found in Coxiella burnetii (strain RSA 493 / Nine Mile phase I).